The sequence spans 34 residues: Photosystem II reaction center protein M (34 aa).

Residues 5-25 (ILAFSATALLILFPTALLLIL) traverse the membrane as a helical segment.

Belongs to the PsbM family. In terms of assembly, PSII is composed of 1 copy each of membrane proteins PsbA, PsbB, PsbC, PsbD, PsbE, PsbF, PsbH, PsbI, PsbJ, PsbK, PsbL, PsbM, PsbT, PsbX, PsbY, PsbZ, Psb30/Ycf12, at least 3 peripheral proteins of the oxygen-evolving complex and a large number of cofactors. It forms dimeric complexes.

It localises to the plastid membrane. Its function is as follows. One of the components of the core complex of photosystem II (PSII). PSII is a light-driven water:plastoquinone oxidoreductase that uses light energy to abstract electrons from H(2)O, generating O(2) and a proton gradient subsequently used for ATP formation. It consists of a core antenna complex that captures photons, and an electron transfer chain that converts photonic excitation into a charge separation. This subunit is found at the monomer-monomer interface. The protein is Photosystem II reaction center protein M of Cuscuta gronovii (Common dodder).